The primary structure comprises 374 residues: Negative elongation factor E (374 aa).

Residues 7-36 (GLSEEEEALQKKFNKLKKKKKALLALKKQS) are a coiled coil. The span at 30 to 43 (LALKKQSSSSTASQ) shows a compositional bias: low complexity. A disordered region spans residues 30–58 (LALKKQSSSSTASQGGVKRSLSEQPVVDT). S51 bears the Phosphoserine mark. K78 is covalently cross-linked (Glycyl lysine isopeptide (Lys-Gly) (interchain with G-Cter in SUMO1); alternate). K78 participates in a covalent cross-link: Glycyl lysine isopeptide (Lys-Gly) (interchain with G-Cter in SUMO2); alternate. A disordered region spans residues 79-252 (AETKNSGFKR…SDSFPERRAP (174 aa)). A Glycyl lysine isopeptide (Lys-Gly) (interchain with G-Cter in SUMO2) cross-link involves residue K82. A compositionally biased stretch (basic and acidic residues) spans 90-101 (RTLEGKLKDPEK). 2 positions are modified to phosphoserine: S113 and S115. E122 carries the polyADP-ribosyl glutamic acid modification. 2 positions are modified to phosphoserine: S131 and S139. E151 is modified (polyADP-ribosyl glutamic acid). The residue at position 165 (S165) is a Phosphoserine. E172 carries the post-translational modification PolyADP-ribosyl glutamic acid. Phosphoserine occurs at positions 179, 181, 185, and 187. 27 tandem repeats follow at residues 184–185 (RS), 186–187 (RS), 188–189 (RD), 190–191 (RS), 192–193 (RE), 194–195 (RN), 196–197 (RD), 198–199 (RD), 200–201 (RD), 202–203 (RD), 204–205 (RE), 206–207 (RD), 208–209 (RE), 210–211 (RD), 212–213 (RD), 214–215 (RD), 216–217 (RD), 218–219 (RE), 220–221 (RD), 222–223 (RD), 224–225 (RD), 226–227 (RD), 228–229 (RD), 230–231 (RD), 232–233 (RE), 234–235 (RD), and 236–237 (RE). The 27 X 2 AA approximate tandem repeats of R-[DSNE] stretch occupies residues 184–237 (RSRSRDRSRERNRDRDRDRDRERDRERDRDRDRDRERDRDRDRDRDRDRERDRE). Residues 186 to 250 (RSRDRSRERN…RRSDSFPERR (65 aa)) show a composition bias toward basic and acidic residues. Residue S191 is modified to Phosphoserine. Residues S243 and S245 each carry the phosphoserine modification. The region spanning 256-326 (NTLYVYGEDM…VQLKVSIARK (71 aa)) is the RRM domain. Phosphothreonine is present on residues T266 and T268. Residues S275 and S347 each carry the phosphoserine modification. PolyADP-ribosyl glutamic acid is present on E368.

The protein belongs to the RRM NELF-E family. In terms of assembly, the NELF complex is composed of NELFA, NELFB, NELFCD and NELFE. Interacts with NELFB. Phosphorylated by the P-TEFb complex at sites next to its RNA recognition motif, promoting its release from chromatin. In terms of processing, sumoylated. Post-translationally, poly-ADP-ribosylated by PARP1, thereby preventing RNA-binding and relieving transcription pausing.

The protein resides in the nucleus. Its subcellular location is the chromosome. Its function is as follows. Essential component of the NELF complex, a complex that negatively regulates the elongation of transcription by RNA polymerase II. The NELF complex, which acts via an association with the DSIF complex and causes transcriptional pausing, is counteracted by the P-TEFb kinase complex. Provides the strongest RNA binding activity of the NELF complex and may initially recruit the NELF complex to RNA. In Bos taurus (Bovine), this protein is Negative elongation factor E (NELFE).